The chain runs to 835 residues: Leucine--tRNA ligase (835 aa).

A 'HIGH' region motif is present at residues 36–46 (PYPSGKIHVGH). The short motif at 602–606 (KMSKS) is the 'KMSKS' region element. Lys-605 contributes to the ATP binding site.

The protein belongs to the class-I aminoacyl-tRNA synthetase family.

The protein resides in the cytoplasm. It catalyses the reaction tRNA(Leu) + L-leucine + ATP = L-leucyl-tRNA(Leu) + AMP + diphosphate. The sequence is that of Leucine--tRNA ligase from Rickettsia africae (strain ESF-5).